The sequence spans 167 residues: Large ribosomal subunit protein bL9 (167 aa).

The protein belongs to the bacterial ribosomal protein bL9 family.

Functionally, binds to the 23S rRNA. This is Large ribosomal subunit protein bL9 from Nitratidesulfovibrio vulgaris (strain ATCC 29579 / DSM 644 / CCUG 34227 / NCIMB 8303 / VKM B-1760 / Hildenborough) (Desulfovibrio vulgaris).